A 320-amino-acid chain; its full sequence is Glycerol-3-phosphate dehydrogenase [NAD(P)+] (320 aa).

3 residues coordinate NADPH: F11, R30, and K102. Sn-glycerol 3-phosphate-binding residues include K102, G130, and S132. Residue A134 coordinates NADPH. Residues K185, D238, S248, R249, and N250 each coordinate sn-glycerol 3-phosphate. K185 functions as the Proton acceptor in the catalytic mechanism. R249 lines the NADPH pocket. Residue E270 participates in NADPH binding.

The protein belongs to the NAD-dependent glycerol-3-phosphate dehydrogenase family.

Its subcellular location is the cytoplasm. It carries out the reaction sn-glycerol 3-phosphate + NAD(+) = dihydroxyacetone phosphate + NADH + H(+). The enzyme catalyses sn-glycerol 3-phosphate + NADP(+) = dihydroxyacetone phosphate + NADPH + H(+). Its pathway is membrane lipid metabolism; glycerophospholipid metabolism. Its function is as follows. Catalyzes the reduction of the glycolytic intermediate dihydroxyacetone phosphate (DHAP) to sn-glycerol 3-phosphate (G3P), the key precursor for phospholipid synthesis. The polypeptide is Glycerol-3-phosphate dehydrogenase [NAD(P)+] (Ruegeria sp. (strain TM1040) (Silicibacter sp.)).